The primary structure comprises 337 residues: UbiA prenyltransferase domain-containing protein 1 (337 aa).

Alanine 2 carries the post-translational modification N-acetylalanine. 8 consecutive transmembrane segments (helical) span residues 82–102, 133–153, 159–179, 187–207, 208–228, 244–266, 276–296, and 314–334; these read LLVGCAVAVLAVHGAGNLVNT, FGVFLYTLGCVCAACLYCLSP, LALIYFGGLSGSFLYTGGIGF, LVILITFGPLAVMFAYAVQVG, SLAVFPLVYAIPLALSTEAVL, IVTLAILIGPTLSYVLYNTLLFL, THCSISLALPLLTVPMAFSLE, and LNLLLGLFYVFGIILAPAGSL.

Belongs to the UbiA prenyltransferase family. Interacts with HMGCR and SOAT1.

The protein localises to the endoplasmic reticulum membrane. It localises to the golgi apparatus membrane. The protein resides in the mitochondrion membrane. It catalyses the reaction menadiol + (2E,6E,10E)-geranylgeranyl diphosphate = menaquinol-4 + diphosphate. It carries out the reaction all-trans-decaprenyl diphosphate + 4-hydroxybenzoate = 4-hydroxy-3-(all-trans-decaprenyl)benzoate + diphosphate. The protein operates within quinol/quinone metabolism; menaquinone biosynthesis. It functions in the pathway cofactor biosynthesis; ubiquinone biosynthesis. Its function is as follows. Prenyltransferase that mediates the formation of menaquinone-4 (MK-4) and coenzyme Q10. MK-4 is a vitamin K2 isoform required for endothelial cell development. Mediates the conversion of phylloquinone (PK) into MK-4, probably by cleaving the side chain of phylloquinone (PK) to release 2-methyl-1,4-naphthoquinone (menadione; K3) and then prenylating it with geranylgeranyl pyrophosphate (GGPP) to form MK-4. Also plays a role in cardiovascular development independently of MK-4 biosynthesis, by acting as a coenzyme Q10 biosynthetic enzyme: coenzyme Q10, also named ubiquinone, plays an important antioxidant role in the cardiovascular system. Mediates biosynthesis of coenzyme Q10 in the Golgi membrane, leading to protect cardiovascular tissues from NOS3/eNOS-dependent oxidative stress. The protein is UbiA prenyltransferase domain-containing protein 1 (UBIAD1) of Ailuropoda melanoleuca (Giant panda).